The chain runs to 66 residues: Large ribosomal subunit protein uL29 (66 aa).

The protein belongs to the universal ribosomal protein uL29 family.

This Syntrophobacter fumaroxidans (strain DSM 10017 / MPOB) protein is Large ribosomal subunit protein uL29.